Here is a 635-residue protein sequence, read N- to C-terminus: Probable potassium transport system protein Kup (635 aa).

12 helical membrane passes run 22–42 (LVIGAIGVVFGDIGTSPLYTL), 59–79 (VLGILSLVFWALMLVVTLKYV), 111–131 (MYVVGILGIFGASLFFGDGVI), 148–168 (APKLEAFVVPITLVVLGMLFL), 180–200 (AFGPITLVWFFALGAIGVYNM), 216–236 (VLFFVEHNWHAVFVLGAVVLA), 259–279 (WQFVVLPMLTLTYLGQGALVL), 297–317 (ALYPMIVLATAATVIASQALI), 349–369 (IYVPAVNWCLLLAVAVAVVGF), 378–398 (AYGVSVTGTMLITTVLMVIYA), 404–424 (VPAPLLWLFALVFLAVDCAFF), and 428–448 (IIKFLDGAWFPLLLGLILFTL).

Belongs to the HAK/KUP transporter (TC 2.A.72) family.

It localises to the cell inner membrane. The catalysed reaction is K(+)(in) + H(+)(in) = K(+)(out) + H(+)(out). In terms of biological role, transport of potassium into the cell. Likely operates as a K(+):H(+) symporter. The polypeptide is Probable potassium transport system protein Kup (Xanthomonas oryzae pv. oryzae (strain KACC10331 / KXO85)).